We begin with the raw amino-acid sequence, 60 residues long: Cytotoxin 1 (60 aa).

Cystine bridges form between Cys-3–Cys-21, Cys-14–Cys-38, Cys-42–Cys-53, and Cys-54–Cys-59.

This sequence belongs to the three-finger toxin family. Short-chain subfamily. Type IA cytotoxin sub-subfamily. In terms of assembly, monomer in solution; Homodimer and oligomer in the presence of negatively charged lipids forming a pore with a size ranging between 20 and 30 Angstroms. As to expression, expressed by the venom gland.

It localises to the secreted. The protein resides in the target cell membrane. Functionally, shows cytolytic activity on many different cells by forming pore in lipid membranes. In vivo, increases heart rate or kills the animal by cardiac arrest. In addition, it binds to heparin with high affinity, interacts with Kv channel-interacting protein 1 (KCNIP1) in a calcium-independent manner, and binds to integrin alpha-V/beta-3 (ITGAV/ITGB3) with moderate affinity. This is Cytotoxin 1 from Naja mossambica (Mozambique spitting cobra).